The chain runs to 281 residues: ATP synthase gamma chain (281 aa).

This sequence belongs to the ATPase gamma chain family. As to quaternary structure, F-type ATPases have 2 components, CF(1) - the catalytic core - and CF(0) - the membrane proton channel. CF(1) has five subunits: alpha(3), beta(3), gamma(1), delta(1), epsilon(1). CF(0) has three main subunits: a, b and c.

Its subcellular location is the cell membrane. Functionally, produces ATP from ADP in the presence of a proton gradient across the membrane. The gamma chain is believed to be important in regulating ATPase activity and the flow of protons through the CF(0) complex. This chain is ATP synthase gamma chain, found in Clostridium pasteurianum.